Here is a 62-residue protein sequence, read N- to C-terminus: UPF0434 protein Fphi_1862 (62 aa).

The protein belongs to the UPF0434 family.

This is UPF0434 protein Fphi_1862 from Francisella philomiragia subsp. philomiragia (strain ATCC 25017 / CCUG 19701 / FSC 153 / O#319-036).